The primary structure comprises 430 residues: V-type ATP synthase beta chain 1 (430 aa).

Belongs to the ATPase alpha/beta chains family.

Its function is as follows. Produces ATP from ADP in the presence of a proton gradient across the membrane. The V-type beta chain is a regulatory subunit. The sequence is that of V-type ATP synthase beta chain 1 (atpB1) from Treponema pallidum (strain Nichols).